The primary structure comprises 229 residues: Probable U3 small nucleolar RNA-associated protein 11 (229 aa).

2 disordered regions span residues 1 to 23 (MSSL…ESRK) and 199 to 229 (KKPG…QRKR).

This sequence belongs to the UTP11 family. As to quaternary structure, component of the ribosomal small subunit (SSU) processome.

Its subcellular location is the nucleus. The protein resides in the nucleolus. In terms of biological role, involved in nucleolar processing of pre-18S ribosomal RNA. The polypeptide is Probable U3 small nucleolar RNA-associated protein 11 (Oryza sativa subsp. japonica (Rice)).